We begin with the raw amino-acid sequence, 142 residues long: Small ribosomal subunit protein uS9c (142 aa).

It belongs to the universal ribosomal protein uS9 family.

It is found in the plastid. Its subcellular location is the chloroplast. This is Small ribosomal subunit protein uS9c (rps9) from Stigeoclonium helveticum (Green alga).